We begin with the raw amino-acid sequence, 502 residues long: Lysine--tRNA ligase (502 aa).

Residues glutamate 413 and glutamate 420 each coordinate Mg(2+).

Belongs to the class-II aminoacyl-tRNA synthetase family. As to quaternary structure, homodimer. Mg(2+) is required as a cofactor.

The protein localises to the cytoplasm. The enzyme catalyses tRNA(Lys) + L-lysine + ATP = L-lysyl-tRNA(Lys) + AMP + diphosphate. The polypeptide is Lysine--tRNA ligase (lysS) (Haemophilus influenzae (strain ATCC 51907 / DSM 11121 / KW20 / Rd)).